The primary structure comprises 753 residues: Dolichyl-phosphate-mannose--protein mannosyltransferase 3 (753 aa).

The Cytoplasmic portion of the chain corresponds to 1 to 50 (MPYRVATGYSEKSTDDDLIWRTPIVKEELEDADNFLKDDAELYDKVKNES). A helical membrane pass occupies residues 51-71 (AVSHLDTIVMPIIFTVLGMFT). Residues 72 to 148 (RMYKIGRNNH…IDYVKMRLFQ (77 aa)) are Lumenal-facing. Asn124 carries an N-linked (GlcNAc...) asparagine glycan. A helical transmembrane segment spans residues 149 to 169 (AMFSSLCVPLAYFTGRAIGFS). Topologically, residues 170-174 (RLSVW) are cytoplasmic. A helical transmembrane segment spans residues 175–195 (LFTILVIFENSYATLGKFILL). The Lumenal segment spans residues 196-235 (DSMLLFFTVSSYFCLAKFHTMRKSPFSARWWLWLCLTGLN). A helical transmembrane segment spans residues 236-256 (LGCAISVKMVGLFIISVVGIY). Topologically, residues 257 to 282 (TISELWNLLSDRSVSWKVYVNHWLAR) are cytoplasmic. The chain crosses the membrane as a helical span at residues 283 to 303 (IFGLIIIPVCVFLLCFKIHFD). The Lumenal portion of the chain corresponds to 304 to 602 (LLSNSGPGDS…IKYFLLGSPA (299 aa)). An N-linked (GlcNAc...) asparagine glycan is attached at Asn324. Positions 332-387 (PRDVALGSSIISIKNQALGGALLHSHVQPFPEGSEQQQVTVYGYSDANNEWFFQRI) constitute an MIR 1 domain. N-linked (GlcNAc...) asparagine glycosylation occurs at Asn398. MIR domains follow at residues 401–457 (IEFV…IEIV) and 465–523 (PTLL…IETH). A helical transmembrane segment spans residues 603-623 (SVWPSSIAVCALIIHVIFLTL). Over 624–639 (KWQRQCVILSDPVERD) the chain is Cytoplasmic. Residues 640–660 (VFVMAAFYPLLAWLLHYMPFV) form a helical membrane-spanning segment. The Lumenal segment spans residues 661-665 (VMSRV). The helical transmembrane segment at 666–686 (VYAHHYLPTLYFALMILSYYF) threads the bilayer. The Cytoplasmic portion of the chain corresponds to 687–703 (DMITKRWATRNTGKFLR). A helical transmembrane segment spans residues 704–724 (LGAYIVYGSIVIAGFFYFSPF). Residues 725 to 753 (SFGMDGPVDDYAYLAWLPTWQIVEDIRNT) lie on the Lumenal side of the membrane.

It belongs to the glycosyltransferase 39 family. PMT3 and PMT5 form a functional heterodimer. Also forms a minor complex with PMT1.

Its subcellular location is the endoplasmic reticulum membrane. It catalyses the reaction a di-trans,poly-cis-dolichyl beta-D-mannosyl phosphate + L-seryl-[protein] = 3-O-(alpha-D-mannosyl)-L-seryl-[protein] + a di-trans,poly-cis-dolichyl phosphate + H(+). The catalysed reaction is a di-trans,poly-cis-dolichyl beta-D-mannosyl phosphate + L-threonyl-[protein] = 3-O-(alpha-D-mannosyl)-L-threonyl-[protein] + a di-trans,poly-cis-dolichyl phosphate + H(+). Its pathway is protein modification; protein glycosylation. Protein O-mannosyltransferase involved in O-glycosylation which is essential for cell wall rigidity. Forms a heterodimeric complex with PMT5 and more rarely with PMT1 to transfer mannose from Dol-P-mannose to Ser or Thr residues on proteins. Seems to have redundant activity to PMT2. The polypeptide is Dolichyl-phosphate-mannose--protein mannosyltransferase 3 (Saccharomyces cerevisiae (strain ATCC 204508 / S288c) (Baker's yeast)).